The chain runs to 476 residues: Arginine biosynthesis bifunctional protein ArgJ, mitochondrial (476 aa).

Substrate is bound by residues Thr193, Lys219, Thr237, Glu337, Asn471, and Ser476. Residue Thr237 is the Nucleophile of the active site.

Belongs to the ArgJ family. As to quaternary structure, heterodimer of an alpha and a beta chain. In terms of processing, the alpha and beta chains are autoproteolytically processed from a single precursor protein within the mitochondrion.

It localises to the mitochondrion matrix. It catalyses the reaction N(2)-acetyl-L-ornithine + L-glutamate = N-acetyl-L-glutamate + L-ornithine. It carries out the reaction L-glutamate + acetyl-CoA = N-acetyl-L-glutamate + CoA + H(+). Its pathway is amino-acid biosynthesis; L-arginine biosynthesis; L-ornithine and N-acetyl-L-glutamate from L-glutamate and N(2)-acetyl-L-ornithine (cyclic): step 1/1. It functions in the pathway amino-acid biosynthesis; L-arginine biosynthesis; N(2)-acetyl-L-ornithine from L-glutamate: step 1/4. Functionally, catalyzes two activities which are involved in the cyclic version of arginine biosynthesis: the synthesis of acetylglutamate from glutamate and acetyl-CoA, and of ornithine by transacetylation between acetylornithine and glutamate. The protein is Arginine biosynthesis bifunctional protein ArgJ, mitochondrial of Cryptococcus neoformans var. neoformans serotype D (strain B-3501A) (Filobasidiella neoformans).